The sequence spans 161 residues: SsrA-binding protein (161 aa).

Residues 138 to 161 are disordered; the sequence is DKRTDSKEKDWNRDKARIMKSSLR. Residues 139 to 154 are compositionally biased toward basic and acidic residues; that stretch reads KRTDSKEKDWNRDKAR.

It belongs to the SmpB family.

The protein localises to the cytoplasm. In terms of biological role, required for rescue of stalled ribosomes mediated by trans-translation. Binds to transfer-messenger RNA (tmRNA), required for stable association of tmRNA with ribosomes. tmRNA and SmpB together mimic tRNA shape, replacing the anticodon stem-loop with SmpB. tmRNA is encoded by the ssrA gene; the 2 termini fold to resemble tRNA(Ala) and it encodes a 'tag peptide', a short internal open reading frame. During trans-translation Ala-aminoacylated tmRNA acts like a tRNA, entering the A-site of stalled ribosomes, displacing the stalled mRNA. The ribosome then switches to translate the ORF on the tmRNA; the nascent peptide is terminated with the 'tag peptide' encoded by the tmRNA and targeted for degradation. The ribosome is freed to recommence translation, which seems to be the essential function of trans-translation. The chain is SsrA-binding protein from Aliivibrio fischeri (strain MJ11) (Vibrio fischeri).